Here is a 394-residue protein sequence, read N- to C-terminus: DNA primase large subunit PriL (394 aa).

4 residues coordinate [4Fe-4S] cluster: Cys-231, Cys-340, Cys-351, and Cys-357.

It belongs to the eukaryotic-type primase large subunit family. As to quaternary structure, heterodimer of a small subunit (PriS) and a large subunit (PriL). The cofactor is [4Fe-4S] cluster.

In terms of biological role, regulatory subunit of DNA primase, an RNA polymerase that catalyzes the synthesis of short RNA molecules used as primers for DNA polymerase during DNA replication. Stabilizes and modulates the activity of the small subunit, increasing the rate of DNA synthesis, and conferring RNA synthesis capability. The DNA polymerase activity may enable DNA primase to also catalyze primer extension after primer synthesis. May also play a role in DNA repair. The polypeptide is DNA primase large subunit PriL (Pyrococcus horikoshii (strain ATCC 700860 / DSM 12428 / JCM 9974 / NBRC 100139 / OT-3)).